The sequence spans 61 residues: Small ribosomal subunit protein uS14 (61 aa).

Residues Cys-24, Cys-27, Cys-40, and Cys-43 each contribute to the Zn(2+) site.

The protein belongs to the universal ribosomal protein uS14 family. Zinc-binding uS14 subfamily. Part of the 30S ribosomal subunit. Contacts proteins S3 and S10. Zn(2+) is required as a cofactor.

Its function is as follows. Binds 16S rRNA, required for the assembly of 30S particles and may also be responsible for determining the conformation of the 16S rRNA at the A site. The polypeptide is Small ribosomal subunit protein uS14 (Oleidesulfovibrio alaskensis (strain ATCC BAA-1058 / DSM 17464 / G20) (Desulfovibrio alaskensis)).